The chain runs to 195 residues: Molybdenum cofactor guanylyltransferase (195 aa).

GTP-binding positions include 10 to 12 (LAG), lysine 23, asparagine 51, aspartate 69, and aspartate 99. Aspartate 99 serves as a coordination point for Mg(2+).

It belongs to the MobA family. Monomer. Mg(2+) is required as a cofactor.

Its subcellular location is the cytoplasm. It carries out the reaction Mo-molybdopterin + GTP + H(+) = Mo-molybdopterin guanine dinucleotide + diphosphate. Transfers a GMP moiety from GTP to Mo-molybdopterin (Mo-MPT) cofactor (Moco or molybdenum cofactor) to form Mo-molybdopterin guanine dinucleotide (Mo-MGD) cofactor. The sequence is that of Molybdenum cofactor guanylyltransferase from Histophilus somni (strain 2336) (Haemophilus somnus).